Reading from the N-terminus, the 261-residue chain is Cytochrome c oxidase subunit 3 (261 aa).

Residues 1-15 (MAHQAHAYHMVDPSP) lie on the Mitochondrial matrix side of the membrane. The chain crosses the membrane as a helical span at residues 16 to 34 (WPITGATAALLVTSGLAAW). Residues 35–40 (FHFNSM) are Mitochondrial intermembrane-facing. A helical membrane pass occupies residues 41–66 (ILILMGLTLLLLTMYQWWRDIIREST). At 67-72 (FQGHHT) the chain is on the mitochondrial matrix side. Residues 73–105 (LPVQKSLRYGMILFITSEVFFFLGFFWAFYHSS) form a helical membrane-spanning segment. The Mitochondrial intermembrane segment spans residues 106–128 (LAPTPELGGLWPPTGITPLDPFE). The chain crosses the membrane as a helical span at residues 129–152 (VPLLNTAVLLASGITVTWAHHSLM). Over 153 to 155 (EGQ) the chain is Mitochondrial matrix. A helical membrane pass occupies residues 156 to 183 (RKEAIQSLFITVLLGLYFTALQATEYYE). Residues 184–190 (SPFTIAD) lie on the Mitochondrial intermembrane side of the membrane. A helical transmembrane segment spans residues 191–223 (GAYGSTFFVATGFHGLHVIIGSTFLIVCLVRQT). Topologically, residues 224-232 (QYHFTSNHH) are mitochondrial matrix. Residues 233–256 (FGFEAAAWYWHFVDVVWLFLYVSI) form a helical membrane-spanning segment. Residues 257 to 261 (YWWGS) are Mitochondrial intermembrane-facing.

Belongs to the cytochrome c oxidase subunit 3 family. As to quaternary structure, component of the cytochrome c oxidase (complex IV, CIV), a multisubunit enzyme composed of 14 subunits. The complex is composed of a catalytic core of 3 subunits MT-CO1, MT-CO2 and MT-CO3, encoded in the mitochondrial DNA, and 11 supernumerary subunits COX4I, COX5A, COX5B, COX6A, COX6B, COX6C, COX7A, COX7B, COX7C, COX8 and NDUFA4, which are encoded in the nuclear genome. The complex exists as a monomer or a dimer and forms supercomplexes (SCs) in the inner mitochondrial membrane with NADH-ubiquinone oxidoreductase (complex I, CI) and ubiquinol-cytochrome c oxidoreductase (cytochrome b-c1 complex, complex III, CIII), resulting in different assemblies (supercomplex SCI(1)III(2)IV(1) and megacomplex MCI(2)III(2)IV(2)).

It localises to the mitochondrion inner membrane. It catalyses the reaction 4 Fe(II)-[cytochrome c] + O2 + 8 H(+)(in) = 4 Fe(III)-[cytochrome c] + 2 H2O + 4 H(+)(out). In terms of biological role, component of the cytochrome c oxidase, the last enzyme in the mitochondrial electron transport chain which drives oxidative phosphorylation. The respiratory chain contains 3 multisubunit complexes succinate dehydrogenase (complex II, CII), ubiquinol-cytochrome c oxidoreductase (cytochrome b-c1 complex, complex III, CIII) and cytochrome c oxidase (complex IV, CIV), that cooperate to transfer electrons derived from NADH and succinate to molecular oxygen, creating an electrochemical gradient over the inner membrane that drives transmembrane transport and the ATP synthase. Cytochrome c oxidase is the component of the respiratory chain that catalyzes the reduction of oxygen to water. Electrons originating from reduced cytochrome c in the intermembrane space (IMS) are transferred via the dinuclear copper A center (CU(A)) of subunit 2 and heme A of subunit 1 to the active site in subunit 1, a binuclear center (BNC) formed by heme A3 and copper B (CU(B)). The BNC reduces molecular oxygen to 2 water molecules using 4 electrons from cytochrome c in the IMS and 4 protons from the mitochondrial matrix. The chain is Cytochrome c oxidase subunit 3 (MT-CO3) from Latimeria chalumnae (Coelacanth).